The primary structure comprises 639 residues: Kininogen-1 (639 aa).

The signal sequence occupies residues 1–18 (MKLITILLLCSRLLPSLA). Positions 28–132 (CNDESLFQAV…TQICNITPGK (105 aa)) constitute a Cystatin kininogen-type 1 domain. Disulfide bonds link Cys-28/Cys-609, Cys-83/Cys-94, Cys-107/Cys-126, Cys-142/Cys-145, Cys-206/Cys-218, Cys-229/Cys-248, Cys-264/Cys-267, Cys-328/Cys-340, and Cys-351/Cys-370. N-linked (GlcNAc...) asparagine glycosylation occurs at Asn-82. In terms of domain architecture, Cystatin kininogen-type 2 spans 151-254 (VDSPELGPVL…SDSCEFYPGD (104 aa)). Residues Asn-169 and Asn-205 are each glycosylated (N-linked (GlcNAc...) asparagine). Residues 273-376 (VDSPELKEAL…TVKCKVLDMT (104 aa)) enclose the Cystatin kininogen-type 3 domain. Asn-294 is a glycosylation site (N-linked (GlcNAc...) asparagine). Phosphoserine is present on Ser-332. Disordered regions lie at residues 438–462 (NHQG…GHGH) and 476–547 (GYDH…LNPP). A compositionally biased stretch (basic residues) spans 482-502 (PVGHGHGQRHGHGHGHGHGRD). The segment covering 503-519 (KHTNKDKNNVKHTDQRR) has biased composition (basic and acidic residues). Residues 522-537 (LTSSSEDNTTSTQIQG) show a composition bias toward polar residues. A glycan (N-linked (GlcNAc...) asparagine) is linked at Asn-529.

Bradykinin is released from kininogen by plasma kallikrein. In terms of processing, phosphorylated by FAM20C in the extracellular medium. Post-translationally, bradykinin is inactivated by ACE, which removes the dipeptide Arg-Phe from its C-terminus. As to expression, plasma.

It localises to the secreted. The protein resides in the extracellular space. Kininogens are inhibitors of thiol proteases. HMW-kininogen plays an important role in blood coagulation by helping to position optimally prekallikrein and factor XI next to factor XII; HMW-kininogen inhibits the thrombin- and plasmin-induced aggregation of thrombocytes. LMW-kininogen inhibits the aggregation of thrombocytes. LMW-kininogen is in contrast to HMW-kininogen not involved in blood clotting. Its function is as follows. The active peptide bradykinin is a potent vasodilatator that is released from HMW-kininogen shows a variety of physiological effects: (A) influence in smooth muscle contraction, (B) induction of hypotension, (C) natriuresis and diuresis, (D) decrease in blood glucose level, (E) it is a mediator of inflammation and causes (E1) increase in vascular permeability, (E2) stimulation of nociceptors (4E3) release of other mediators of inflammation (e.g. prostaglandins), (F) it has a cardioprotective effect (directly via bradykinin action, indirectly via endothelium-derived relaxing factor action). In Rattus norvegicus (Rat), this protein is Kininogen-1 (Kng1).